We begin with the raw amino-acid sequence, 386 residues long: MAKPVSIEVYNPNGKYRVVSTKPMPGTRWINLLVDQGCRVEICHLKKTILSVEDIIDLIGDKCDGVIGQLTEDWGETLFSALSKAGGKAFSNMAVGYNNVDVEAANKYGIAVGNTPGVLTETTAELAASLSLAAARRIVEADEFMRGGLYEGWLPHLFVGNLLKGQTVGVIGAGRIGSAYARMMVEGFKMNLIYFDLYQSTRLEKFVTAYGQFLKANGEQPVTWKRASSMEEVLREADLISLHPVLDKTTYHLVNKERLAMMKKEAILVNCSRGPVIDEAALVEHLKENPMFRVGLDVFEEEPFMKPGLADTKNAIVVPHIASASKWTREGMATLAALNVLGRVKGYPIWHDPNRVDPFLNENASPPNASPSIVNSKALGLPVSKL.

Residues 175-176 (RI), 271-273 (CSR), and Asp-297 each bind NAD(+). The active site involves Arg-273. The active site involves Glu-302. His-320 serves as the catalytic Proton donor. Position 320-323 (320-323 (HIAS)) interacts with NAD(+). The Microbody targeting signal motif lies at 384–386 (SKL).

The protein belongs to the D-isomer specific 2-hydroxyacid dehydrogenase family. In terms of tissue distribution, present in leaves (at protein level). Mostly expressed in photosynthetic tissues such as leaves, stems, flowers, buds, and, to a lower extent, in siliques and roots.

Its subcellular location is the peroxisome. The catalysed reaction is (R)-glycerate + NAD(+) = 3-hydroxypyruvate + NADH + H(+). Its pathway is photosynthesis; photorespiration; 3-phospho-D-glycerate from glycine: step 3/4. Its activity is regulated as follows. Slightly inhibited by oxalate. Functionally, catalyzes the NADH-dependent reduction of hydroxypyruvate into glycerate in the photorespiratory core cycle. Mediates fatty acid beta-oxidation in germinating seeds when malate dehydrogenase is absent. In Arabidopsis thaliana (Mouse-ear cress), this protein is Glycerate dehydrogenase HPR, peroxisomal (HPR).